The chain runs to 785 residues: Uncoating factor OPG117 (785 aa).

This sequence belongs to the orthopoxvirus OPG117 family. In terms of assembly, homomultimer; hexamer. Interacts with OPG148.

It localises to the host cytoplasm. In terms of biological role, multifunctional protein required for genome uncoating and replication. Major viral uncoating protein that is required for the release of the viral genome from incoming viral cores containing the viral DNA genome. Possesses an ATPase activity that is required for hexamerization and uncoating. This Cynomys gunnisoni (Gunnison's prairie dog) protein is Uncoating factor OPG117 (OPG117).